Reading from the N-terminus, the 384-residue chain is Protein V (384 aa).

2 disordered regions span residues 1-23 (MDQD…GGRE) and 38-318 (SEPT…KKGH). The span at 7-20 (ILKEDSEVEREAPG) shows a compositional bias: basic and acidic residues. Over residues 50 to 59 (LHNTINTPQG) the composition is skewed to polar residues. Ser-68 carries the post-translational modification Phosphoserine; by host. Over residues 83-101 (RSGEESRVSGRTSKPEAEA) the composition is skewed to basic and acidic residues. Ser-125 carries the phosphoserine; by host modification. Basic and acidic residues predominate over residues 150–168 (GIEDENREMAAHPDKRGED). The span at 191 to 206 (ASNNGRSMEPGSSHSA) shows a compositional bias: polar residues. Phosphoserine; by host occurs at positions 192, 249, 257, and 260. Zn(2+)-binding residues include His-318, Cys-337, Cys-341, Cys-353, Cys-355, Cys-358, Cys-362, and Cys-365.

Belongs to the paramyxoviruses V protein family. Interacts with host IFIH1/MDA5 and DHX58/LGP2. Interacts with host IRF3. Interacts with host RIGI regulatory protein (via CARDs domain) and host TRIM25 (via SPRY domain); these interactions prevent TRIM25-mediated ubiquitination of RIG-I and disrupts downstream RIG-I signaling.

Its subcellular location is the host cytoplasm. Its function is as follows. Plays an essential role in the inhibition of host immune response. Prevents the establishment of cellular antiviral state by blocking interferon-alpha/beta (IFN-alpha/beta) production and signaling pathway. Interacts with host IFIH1/MDA5 and DHX58/LGP2 to inhibit the transduction pathway involved in the activation of IFN-beta promoter, thus protecting the virus against cell antiviral state. Also interacts with and inhibits host IRF3. Blocks the type I interferon signaling pathway by disrupting the RIG-I signaling pathway. The chain is Protein V (P/V/C) from Sendai virus (strain Harris) (SeV).